The sequence spans 443 residues: Thymidine phosphorylase (443 aa).

It belongs to the thymidine/pyrimidine-nucleoside phosphorylase family. In terms of assembly, homodimer.

The catalysed reaction is thymidine + phosphate = 2-deoxy-alpha-D-ribose 1-phosphate + thymine. The protein operates within pyrimidine metabolism; dTMP biosynthesis via salvage pathway; dTMP from thymine: step 1/2. Its function is as follows. The enzymes which catalyze the reversible phosphorolysis of pyrimidine nucleosides are involved in the degradation of these compounds and in their utilization as carbon and energy sources, or in the rescue of pyrimidine bases for nucleotide synthesis. This Aliivibrio fischeri (strain ATCC 700601 / ES114) (Vibrio fischeri) protein is Thymidine phosphorylase.